The following is a 254-amino-acid chain: Type III pantothenate kinase (254 aa).

Position 7-14 (7-14 (DIGNTRLK)) interacts with ATP. Substrate-binding positions include Tyr-97 and 104 to 107 (GSDR). The active-site Proton acceptor is Asp-106. Thr-134 contributes to the ATP binding site. Thr-184 provides a ligand contact to substrate.

Belongs to the type III pantothenate kinase family. Homodimer. The cofactor is NH4(+). K(+) is required as a cofactor.

Its subcellular location is the cytoplasm. It catalyses the reaction (R)-pantothenate + ATP = (R)-4'-phosphopantothenate + ADP + H(+). The protein operates within cofactor biosynthesis; coenzyme A biosynthesis; CoA from (R)-pantothenate: step 1/5. Functionally, catalyzes the phosphorylation of pantothenate (Pan), the first step in CoA biosynthesis. The protein is Type III pantothenate kinase of Methylibium petroleiphilum (strain ATCC BAA-1232 / LMG 22953 / PM1).